Here is a 202-residue protein sequence, read N- to C-terminus: Ras-related protein RIC1 (202 aa).

GTP contacts are provided by residues 15-23 (GDSGVGKSC), 33-40 (YLESYIST), 63-67 (DTAGQ), 121-124 (NKCD), and 151-153 (SAK). The short motif at 37 to 45 (YISTIGVDF) is the Effector region element. Residues 174 to 185 (ASQPATNASKPA) are compositionally biased toward polar residues. Residues 174–202 (ASQPATNASKPATVQMRGQPVAQQSSCCS) form a disordered region. 2 S-geranylgeranyl cysteine lipidation sites follow: Cys-200 and Cys-201.

This sequence belongs to the small GTPase superfamily. Rab family.

It localises to the cell membrane. In terms of biological role, possesses GTPase activity. The protein is Ras-related protein RIC1 (RIC1) of Oryza sativa subsp. japonica (Rice).